The following is a 310-amino-acid chain: Formyltetrahydrofolate deformylase (310 aa).

The interval 1–30 (MGKGSMTAHATPNEPDYPPPPGGPPPPADI) is disordered. Residues 15–28 (PDYPPPPGGPPPPA) are compositionally biased toward pro residues. In terms of domain architecture, ACT spans 32-108 (RLLLRCHDRP…VADKFGIDYR (77 aa)). Residue Asp-255 is part of the active site.

Belongs to the PurU family.

It carries out the reaction (6R)-10-formyltetrahydrofolate + H2O = (6S)-5,6,7,8-tetrahydrofolate + formate + H(+). Its pathway is purine metabolism; IMP biosynthesis via de novo pathway; formate from 10-formyl-5,6,7,8-tetrahydrofolate: step 1/1. Catalyzes the hydrolysis of 10-formyltetrahydrofolate (formyl-FH4) to formate and tetrahydrofolate (FH4). This Mycobacterium bovis (strain ATCC BAA-935 / AF2122/97) protein is Formyltetrahydrofolate deformylase.